The primary structure comprises 230 residues: Ion-translocating oxidoreductase complex subunit E (230 aa).

5 helical membrane-spanning segments follow: residues 22-42 (LLGL…LGLG), 63-83 (TPAE…VSAV), 86-106 (LINA…PLIV), 125-145 (WLSA…MFVL), and 182-202 (PFLL…MLAV).

This sequence belongs to the NqrDE/RnfAE family. In terms of assembly, the complex is composed of six subunits: RsxA, RsxB, RsxC, RsxD, RsxE and RsxG.

It is found in the cell inner membrane. Part of a membrane-bound complex that couples electron transfer with translocation of ions across the membrane. Required to maintain the reduced state of SoxR. This Salmonella paratyphi A (strain ATCC 9150 / SARB42) protein is Ion-translocating oxidoreductase complex subunit E.